Reading from the N-terminus, the 269-residue chain is Probable cytochrome c oxidase subunit 2 (269 aa).

Transmembrane regions (helical) follow at residues 8-28, 50-70, and 87-107; these read ITLI…PLPW, LLYI…FVCI, and ILIE…IAVP. Residues His189, Cys224, Cys228, and His232 each contribute to the Cu cation site.

The protein belongs to the cytochrome c oxidase subunit 2 family. The cofactor is Cu cation. Heme serves as cofactor.

The protein resides in the cell membrane. It catalyses the reaction 4 Fe(II)-[cytochrome c] + O2 + 8 H(+)(in) = 4 Fe(III)-[cytochrome c] + 2 H2O + 4 H(+)(out). Subunits I and II form the functional core of the enzyme complex. Electrons originating in cytochrome c are transferred via heme a and Cu(A) to the binuclear center formed by heme a3 and Cu(B). The polypeptide is Probable cytochrome c oxidase subunit 2 (ctaC) (Rickettsia bellii (strain RML369-C)).